A 267-amino-acid chain; its full sequence is Glutamate racemase (267 aa).

Substrate contacts are provided by residues 13–14 (DS) and 45–46 (YS). Residue Cys-77 is the Proton donor/acceptor of the active site. 78-79 (NT) provides a ligand contact to substrate. The active-site Proton donor/acceptor is Cys-188. 189-190 (TH) contributes to the substrate binding site.

This sequence belongs to the aspartate/glutamate racemases family.

The enzyme catalyses L-glutamate = D-glutamate. It functions in the pathway cell wall biogenesis; peptidoglycan biosynthesis. Its function is as follows. Provides the (R)-glutamate required for cell wall biosynthesis. The protein is Glutamate racemase of Histophilus somni (strain 2336) (Haemophilus somnus).